The chain runs to 301 residues: L-threonate dehydrogenase (301 aa).

Residues 6–34 (YSVA…TYGI) and Thr-101 contribute to the NAD(+) site. The active site involves Lys-177. Lys-245 is a binding site for NAD(+).

Belongs to the HIBADH-related family. L-threonate dehydrogenase subfamily.

It catalyses the reaction L-threonate + NAD(+) = 2-dehydro-L-erythronate + NADH + H(+). Functionally, catalyzes oxidation of L-threonate to 2-oxo-tetronate. Can use either NAD(+) or NADP(+) as cosubstrate, with a preference for NAD(+). The polypeptide is L-threonate dehydrogenase (Haemophilus influenzae (strain ATCC 51907 / DSM 11121 / KW20 / Rd)).